A 358-amino-acid chain; its full sequence is MPGNTFGQVFRLTTWGESHGPAVGCVVDGCPAGLDISEDYIQHELNRRRVGQSRVTSARQESDQVQILSGVFEGRATGAPISMLVFNTDAKPGHYENIKDLYRPGHADYTWDVKYGFRDWRGGGRSSARETIGRVAGGAVAKRLLAQHGVSIIAWTAQLGDLKAEVIDESEIERNIMRCPDARVAALMVERVEQARRSLDSLGGIVEVRARGVPPGLGEPVFDKLQADIGKAMFSIPAIKGVEFGEGFGVAHMTGSVHNDPFERRADGTIGTSSNHHGGILGGISTGEEIVLRIAAKPPASIARLQRTVDREGNPTEIEIHGRHDPTVLPRLVPIAEAMLALVLADHLLRQRLARMER.

NADP(+) is bound by residues Arg48 and Arg54. FMN is bound by residues 125-127 (RSS), Gly282, 297-301 (KPPAS), and Arg323.

This sequence belongs to the chorismate synthase family. As to quaternary structure, homotetramer. FMNH2 serves as cofactor.

It catalyses the reaction 5-O-(1-carboxyvinyl)-3-phosphoshikimate = chorismate + phosphate. It functions in the pathway metabolic intermediate biosynthesis; chorismate biosynthesis; chorismate from D-erythrose 4-phosphate and phosphoenolpyruvate: step 7/7. Functionally, catalyzes the anti-1,4-elimination of the C-3 phosphate and the C-6 proR hydrogen from 5-enolpyruvylshikimate-3-phosphate (EPSP) to yield chorismate, which is the branch point compound that serves as the starting substrate for the three terminal pathways of aromatic amino acid biosynthesis. This reaction introduces a second double bond into the aromatic ring system. In Roseiflexus castenholzii (strain DSM 13941 / HLO8), this protein is Chorismate synthase.